Here is a 358-residue protein sequence, read N- to C-terminus: Trace amine-associated receptor 7h (358 aa).

The Extracellular segment spans residues 1–47; it reads MATDDESFPWDQDSILSRDLLSALSPQLCYENLNRSCVRSPYSPGPR. Asn-34 carries N-linked (GlcNAc...) asparagine glycosylation. 2 disulfide bridges follow: Cys-37-Cys-201 and Cys-120-Cys-205. Residues 48–68 traverse the membrane as a helical segment; that stretch reads LILYAVFGFGAVLAVCGNLLV. The Cytoplasmic portion of the chain corresponds to 69–83; it reads MTSILHFRQLHSPAN. The helical transmembrane segment at 84 to 104 threads the bilayer; the sequence is FLVASLACADLLVGLTVMPFS. The Extracellular portion of the chain corresponds to 105 to 125; it reads MVRSVEGCWYFGDSYCKLHTS. A helical membrane pass occupies residues 126–143; that stretch reads FDMSFCCSSLLHLCFISV. Over 144 to 166 the chain is Cytoplasmic; that stretch reads DRYIAVSDPLIYPIRFTASVSGK. The chain crosses the membrane as a helical span at residues 167–187; the sequence is CITFSWFLSIIYGFSLIYTGA. Over 188-217 the chain is Extracellular; that stretch reads SEAGLKDLVSALSCVGGCQIPMNQSCVLIN. The N-linked (GlcNAc...) asparagine glycan is linked to Asn-210. Residues 218–238 traverse the membrane as a helical segment; sequence FLLFLVPTLVMMTVYSKIFLI. Topologically, residues 239–274 are cytoplasmic; that stretch reads AKQQAQNMEKMSKQTTRASDSYKDRVAKRERKAAKT. The helical transmembrane segment at 275–295 threads the bilayer; sequence LGIAVAAFLLSWLPYLIDSII. At 296–309 the chain is on the extracellular side; it reads DAFLGFITPSYVYE. A helical transmembrane segment spans residues 310-333; that stretch reads ILVWIVYYNSAMNPLIYAFFYPWF. Residues 334–358 lie on the Cytoplasmic side of the membrane; it reads RNAIKLIVTGKILKQNSSTTNLFSE.

It belongs to the G-protein coupled receptor 1 family.

The protein resides in the cell membrane. In terms of biological role, olfactory receptor specific for N,N-dimethylalkylamines trace amines. Trace amine compounds are enriched in animal body fluids and act on trace amine-associated receptors (TAARs) to elicit both intraspecific and interspecific innate behaviors. Ligand-binding causes a conformation change that triggers signaling via G(s)-class of G alpha proteins (GNAL or GNAS). This chain is Trace amine-associated receptor 7h, found in Rattus norvegicus (Rat).